Consider the following 587-residue polypeptide: V-type proton ATPase catalytic subunit A (587 aa).

Residue 243–250 participates in ATP binding; it reads GAFGCGKT.

It belongs to the ATPase alpha/beta chains family. In terms of assembly, V-ATPase is a heteromultimeric enzyme composed of a peripheral catalytic V1 complex (main components: subunits A, B, C, D, E, and F) attached to an integral membrane V0 proton pore complex (main component: the proteolipid protein).

It carries out the reaction ATP + H2O + 4 H(+)(in) = ADP + phosphate + 5 H(+)(out). Catalytic subunit of the peripheral V1 complex of vacuolar ATPase. V-ATPase vacuolar ATPase is responsible for acidifying a variety of intracellular compartments in eukaryotic cells. The polypeptide is V-type proton ATPase catalytic subunit A (Cyanidium caldarium (Red alga)).